The following is a 232-amino-acid chain: Venom allergen 5 (232 aa).

The N-terminal stretch at 1-23 (MEQIKYLLIGIIFSSAISSSLQC) is a signal peptide. Disulfide bonds link C28–C43, C54–C119, and C198–C215. The SCP domain occupies 71 to 217 (LQLHNELRAK…FYTTMVACNY (147 aa)).

It belongs to the CRISP family. Venom allergen 5-like subfamily. Expressed by the venom gland.

It is found in the secreted. In Microctonus hyperodae (Parasitoid wasp), this protein is Venom allergen 5.